We begin with the raw amino-acid sequence, 265 residues long: Phosphate import ATP-binding protein PstB 2 (265 aa).

Residues Phe13–Val260 form the ABC transporter domain. ATP is bound at residue Gly45–Ser52.

Belongs to the ABC transporter superfamily. Phosphate importer (TC 3.A.1.7) family. As to quaternary structure, the complex is composed of two ATP-binding proteins (PstB), two transmembrane proteins (PstC and PstA) and a solute-binding protein (PstS).

It localises to the cell inner membrane. The catalysed reaction is phosphate(out) + ATP + H2O = ADP + 2 phosphate(in) + H(+). Functionally, part of the ABC transporter complex PstSACB involved in phosphate import. Responsible for energy coupling to the transport system. The protein is Phosphate import ATP-binding protein PstB 2 of Synechococcus sp. (strain JA-3-3Ab) (Cyanobacteria bacterium Yellowstone A-Prime).